The chain runs to 289 residues: Urease accessory protein UreD (289 aa).

This sequence belongs to the UreD family. As to quaternary structure, ureD, UreF and UreG form a complex that acts as a GTP-hydrolysis-dependent molecular chaperone, activating the urease apoprotein by helping to assemble the nickel containing metallocenter of UreC. The UreE protein probably delivers the nickel.

It is found in the cytoplasm. Required for maturation of urease via the functional incorporation of the urease nickel metallocenter. The protein is Urease accessory protein UreD of Magnetococcus marinus (strain ATCC BAA-1437 / JCM 17883 / MC-1).